Here is a 40-residue protein sequence, read N- to C-terminus: Photosystem II reaction center protein Psb30 (40 aa).

The helical transmembrane segment at 12-32 threads the bilayer; the sequence is VIFQLTSVALIIIAGPAVIFV.

Belongs to the Psb30/Ycf12 family. As to quaternary structure, PSII is composed of 1 copy each of membrane proteins PsbA, PsbB, PsbC, PsbD, PsbE, PsbF, PsbH, PsbI, PsbJ, PsbK, PsbL, PsbM, PsbT, PsbX, PsbY, PsbZ, Psb30/Ycf12, peripheral proteins PsbO, CyanoQ (PsbQ), PsbU, PsbV and a large number of cofactors. It forms dimeric complexes.

It is found in the cellular thylakoid membrane. Functionally, a core subunit of photosystem II (PSII), probably helps stabilize the reaction center. In Nostoc sp. (strain PCC 7120 / SAG 25.82 / UTEX 2576), this protein is Photosystem II reaction center protein Psb30.